A 596-amino-acid polypeptide reads, in one-letter code: Aspartate--tRNA(Asp/Asn) ligase (596 aa).

Glu-175 contacts L-aspartate. The tract at residues 199–202 is aspartate; sequence QMFK. The L-aspartate site is built by Arg-221 and His-451. ATP is bound at residue 221–223; that stretch reads RDE. Residue Glu-485 participates in ATP binding. Residue Arg-492 coordinates L-aspartate. Position 537 to 540 (537 to 540) interacts with ATP; that stretch reads GVDR.

It belongs to the class-II aminoacyl-tRNA synthetase family. Type 1 subfamily. Homodimer.

The protein localises to the cytoplasm. The enzyme catalyses tRNA(Asx) + L-aspartate + ATP = L-aspartyl-tRNA(Asx) + AMP + diphosphate. In terms of biological role, aspartyl-tRNA synthetase with relaxed tRNA specificity since it is able to aspartylate not only its cognate tRNA(Asp) but also tRNA(Asn). Reaction proceeds in two steps: L-aspartate is first activated by ATP to form Asp-AMP and then transferred to the acceptor end of tRNA(Asp/Asn). This is Aspartate--tRNA(Asp/Asn) ligase from Zymomonas mobilis subsp. mobilis (strain ATCC 31821 / ZM4 / CP4).